A 619-amino-acid chain; its full sequence is E3 ubiquitin-protein ligase complex SLX5-SLX8 subunit SLX5 (619 aa).

A disordered region spans residues 1–23 (MHSDTNGRTKSNNSPSDNNPNET). Low complexity predominate over residues 11-21 (SNNSPSDNNPN). Ser14 and Ser29 each carry phosphoserine. Residues 63-90 (VRSDSRSRNSQRTHITASSERPDFQANN) are disordered. The segment covering 70 to 90 (RNSQRTHITASSERPDFQANN) has biased composition (polar residues). Residues 201–335 (SRRQLLRRSA…ALFTEFRNQL (135 aa)) are EUC1 interaction domain.

In terms of assembly, component of the heterodimeric SUMO-targeted ubiquitin ligase (STUbL) complex composed of SLX5 and SLX8. Interacts with sirtuin SIR2. Interacts with KAR9. Interacts with EUC1.

It localises to the nucleus. It is found in the chromosome. The protein localises to the centromere. Its subcellular location is the kinetochore. The catalysed reaction is S-ubiquitinyl-[E2 ubiquitin-conjugating enzyme]-L-cysteine + [acceptor protein]-L-lysine = [E2 ubiquitin-conjugating enzyme]-L-cysteine + N(6)-ubiquitinyl-[acceptor protein]-L-lysine.. The protein operates within protein modification; protein ubiquitination. Its function is as follows. Component of the SUMO-targeted ubiquitin ligase (STUbL) complex SLX5/SLX8 that mediates ubiquitination and subsequent desumoylation of sumoylated proteins and proteins containing SUMO-like domains for their degradation. The STUbL complex SLX5/SLX8 stimulates ubiquitin conjugating enzymes, including UBC1, UBC4, UBC5 and UBC13-MMS2, and mediates the proteolytic down-regulation of sumoylated proteins. The STUbL complex SLX5/SLX8 is involved in ubiquitin-mediated degradation of histone variant CSE4, preventing mislocalization to euchromatin. The complex plays an essential role in maintenance of chromosome stability and links SUMO-dependent ubiquitination to a centromere-specific function during mitosis. The complex is involved in proteolysis of spindle positioning protein KAR9 and ensures correct spindle function by regulating levels of microtubule-associated proteins. During replication, the complex helps prevent DNA lesions via recombination and has a role in localizing the DNA damage protein DCD2. The complex especially ubiquitinates the nuclease YEN1 and prevents persistent accumulation of a fraction of YEN1 associated with sites of activity in late G2/M and helps maintain the balance between pro- and anti-crossover pathways during homologous recombination. It is also involved in ubiquitin-mediated degradation of DNA repair proteins RAD52 and RAD57. Along with SIR2, promotes silencing of genes at telomeric or ribosomal DNA (rDNA) loci. Finally, the complex is recruited to distinct genomic hotspots of non-H2B protein ubiquitination (ub-hotspots) by the sumoylated transcription factor-like protein EUC1 where it ubiquitinates EUC1 and presumably other targets. In Saccharomyces cerevisiae (strain ATCC 204508 / S288c) (Baker's yeast), this protein is E3 ubiquitin-protein ligase complex SLX5-SLX8 subunit SLX5 (SLX5).